The primary structure comprises 648 residues: Forkhead box protein N1 (648 aa).

Residues 1–105 (MVSLPPPQSD…SDKYPGFGFE (105 aa)) form a disordered region. A compositionally biased stretch (pro residues) spans 58–67 (ERTPSLPPHS). A DNA-binding region (fork-head) is located at residues 271 to 367 (KPIYSYSILI…EELQKWKRKD (97 aa)). 3 disordered regions span residues 392–445 (LGSP…LLMG), 458–508 (LSPG…LLAE), and 623–648 (LEPT…VALA). Pro residues predominate over residues 462 to 473 (LAPPGPPQPLFP).

As to expression, expressed in thymus.

Its subcellular location is the nucleus. Its function is as follows. Transcriptional regulator which regulates the development, differentiation, and function of thymic epithelial cells (TECs) both in the prenatal and postnatal thymus. Acts as a master regulator of the TECs lineage development and is required from the onset of differentiation in progenitor TECs in the developing fetus to the final differentiation steps through which TECs mature to acquire their full functionality. Regulates, either directly or indirectly the expression of a variety of genes that mediate diverse aspects of thymus development and function, including MHC Class II, DLL4, CCL25, CTSL, CD40 and PAX1. Regulates the differentiation of the immature TECs into functional cortical TECs (cTECs) and medullary TECs (mTECs). Essential for maintenance of mTECs population in the postnatal thymus. Involved in the morphogenesis and maintenance of the three-dimensional thymic microstructure which is necessary for a fully functional thymus. Plays an important role in the maintenance of hematopoiesis and particularly T lineage progenitors within the bone marrow niche with age. Essential for the vascularization of the thymus anlage. Promotes the terminal differentiation of epithelial cells in the epidermis and hair follicles, partly by negatively regulating the activity of protein kinase C. Plays a crucial role in the early prenatal stages of T-cell ontogeny. The sequence is that of Forkhead box protein N1 (FOXN1) from Homo sapiens (Human).